A 234-amino-acid polypeptide reads, in one-letter code: Uridylate kinase (234 aa).

Residue 9–12 (KLSG) coordinates ATP. Gly51 is a UMP binding site. Gly52 and Arg56 together coordinate ATP. UMP is bound by residues Asp71 and 132-139 (CGNPFFTT). ATP is bound by residues Thr159, Tyr165, and Asp168.

It belongs to the UMP kinase family. As to quaternary structure, homohexamer.

The protein resides in the cytoplasm. It catalyses the reaction UMP + ATP = UDP + ADP. The protein operates within pyrimidine metabolism; CTP biosynthesis via de novo pathway; UDP from UMP (UMPK route): step 1/1. Inhibited by UTP. Functionally, catalyzes the reversible phosphorylation of UMP to UDP. In Prochlorococcus marinus (strain MIT 9312), this protein is Uridylate kinase.